The chain runs to 120 residues: 2-amino-4-hydroxy-6-hydroxymethyldihydropteridine pyrophosphokinase (120 aa).

The protein belongs to the HPPK family.

The catalysed reaction is 6-hydroxymethyl-7,8-dihydropterin + ATP = (7,8-dihydropterin-6-yl)methyl diphosphate + AMP + H(+). Its pathway is cofactor biosynthesis; tetrahydrofolate biosynthesis; 2-amino-4-hydroxy-6-hydroxymethyl-7,8-dihydropteridine diphosphate from 7,8-dihydroneopterin triphosphate: step 4/4. Its function is as follows. Catalyzes the transfer of pyrophosphate from adenosine triphosphate (ATP) to 6-hydroxymethyl-7,8-dihydropterin, an enzymatic step in folate biosynthesis pathway. The chain is 2-amino-4-hydroxy-6-hydroxymethyldihydropteridine pyrophosphokinase (folK) from Pseudomonas putida (Arthrobacter siderocapsulatus).